The chain runs to 680 residues: MVMGYRVGIDIGGTFTDLVYFDEYSKEFHVVKVPTTPKSPDVGAINAIETAKIEFDKINILIHATTLGTNMFLGQEHLNPPKIALITTKGFKDVIEIGRQRRPKLYDLFFEKPKPLIKRRDRYEVEERIDANGNIITPLNEEELQKIAEIIKKKDYEVVVISFLHSYKNPIHEKKAREIIKNLCSNVDVITSYEINPEYKEYERTSTTVINAYLKPLVSNYLKNFIDSLKNKGFNGKFYVMQSSGGISNIKYATERPAAFIESGPAAGAIAVAYFSKILNDNKVIGFDMGGTTAKASTIINNSPLVTNEYEVGGEVHAGRLIKGSGYPVRFPFIDLAEVSAGGGTIAWVDEGNALRVGPISAGADPGPVCYGKGNDKPTITDANLILGRLGEKLSGGLLKLRKDLAEKAISKLAEKIGESVEEIAYGIIRLANTTMAKALRIVTVERGYDPRDFVMYVFGGAGPLHGVELAEEMEISSILIPPSCGVFSALGLLLADCRVDKAKSILKDIDEVDEEEIENIFIELIEEGLKEVEGFEEIKIVKQIDVRYKGQSYELTIPWTGDLKELADNFHKKHETVYKFSSLEEDIELVNARVTIIGLLTKPEIKCYEVKEYKPKPESYRKVYFSSGWEETAIYNRDKLKPGAIFEGPAVVEEYDSTIVIPPDYTAFVDKYGCLRIER.

The protein belongs to the HyuA family.

This is an uncharacterized protein from Methanocaldococcus jannaschii (strain ATCC 43067 / DSM 2661 / JAL-1 / JCM 10045 / NBRC 100440) (Methanococcus jannaschii).